The following is a 138-amino-acid chain: NADH dehydrogenase [ubiquinone] 1 alpha subcomplex subunit N7BM (138 aa).

It belongs to the complex I NDUFA12 subunit family. In terms of assembly, complex I is composed of 42 different subunits.

The protein localises to the mitochondrion inner membrane. Accessory subunit of the mitochondrial membrane respiratory chain NADH dehydrogenase (Complex I), that is believed not to be involved in catalysis. Complex I functions in the transfer of electrons from NADH to the respiratory chain. The immediate electron acceptor for the enzyme is believed to be ubiquinone. This chain is NADH dehydrogenase [ubiquinone] 1 alpha subcomplex subunit N7BM, found in Yarrowia lipolytica (strain CLIB 122 / E 150) (Yeast).